The primary structure comprises 184 residues: Photosystem I assembly protein Ycf4 (184 aa).

2 helical membrane passes run Asn-21–Tyr-43 and Val-58–Leu-80.

Belongs to the Ycf4 family.

The protein resides in the plastid. It localises to the chloroplast thylakoid membrane. Functionally, seems to be required for the assembly of the photosystem I complex. The chain is Photosystem I assembly protein Ycf4 from Psilotum nudum (Whisk fern).